A 506-amino-acid chain; its full sequence is MAGGGLALDVSSAGNIDAKITAAVVMSCIVAASCGLIFGYDIGISGGVTTMKPFLEKFFPSVLKKASEAKTNVYCVYDSQLLTAFTSSLYVAGLVASLVASRLTAAYGRRTTMILGGFTFLFGALINGLAANIAMLISGRILLGFGVGFTNQAAPVYLSEVAPPRWRGAFNIGFSCFISMGVVAANLINYGTDSHRNGWRISLGLAAVPAAIMTVGCLFISDTPSSLLARGKHDEAHTSLLKLRGVENIADVETELAELVRSSQLAIEARAELFMKTILQRRYRPHLVVAVVIPCFQQLTGITVNAFYAPVLFRSVGFGSGPALIATFILGFVNLGSLLLSTMVIDRFGRRFLFIAGGILMLLCQIAVAVLLAVTVGATGDGEMKKGYAVTVVVLLCIYAAGFGWSWGPLSWLVPSEIFPLKIRPAGQSLSVAVNFAATFALSQTFLATLCDFKYGAFLFYGGWIFTMTIFVIMFLPETKGIPVDSMYQVWEKHWYWQRFTKPTST.

Over 1–19 (MAGGGLALDVSSAGNIDAK) the chain is Cytoplasmic. Transmembrane regions (helical) follow at residues 20–40 (ITAA…IFGY), 81–101 (LLTA…LVAS), 117–137 (GFTF…AMLI), 141–161 (ILLG…LSEV), 168–188 (GAFN…ANLI), 201–221 (ISLG…LFIS), 287–307 (LVVA…VNAF), 325–345 (IATF…TMVI), 352–372 (FLFI…AVLL), 390–410 (VTVV…WGPL), 430–450 (LSVA…LATL), and 456–476 (GAFL…IMFL). Topologically, residues 477-506 (PETKGIPVDSMYQVWEKHWYWQRFTKPTST) are cytoplasmic.

This sequence belongs to the major facilitator superfamily. Sugar transporter (TC 2.A.1.1) family.

It localises to the membrane. Mediates an active uptake of hexoses, probably by sugar/hydrogen symport. This Arabidopsis thaliana (Mouse-ear cress) protein is Sugar transport protein 5 (STP5).